We begin with the raw amino-acid sequence, 168 residues long: NADH dehydrogenase [ubiquinone] 1 alpha subcomplex assembly factor 2 (168 aa).

The disordered stretch occupies residues 112-168 (GKETSEELLPSPTATQVKGHASAPYFGREEPSVAPTSTGKTFQPGSWTPEDGKRQSQ). Phosphoserine is present on Ser133. A compositionally biased stretch (polar residues) spans 145–157 (APTSTGKTFQPGS).

The protein belongs to the complex I NDUFA12 subunit family. Interacts with ARMC9.

The protein resides in the mitochondrion. Acts as a molecular chaperone for mitochondrial complex I assembly. Complex I functions in the transfer of electrons from NADH to the respiratory chain. The immediate electron acceptor for the enzyme is believed to be ubiquinone. Is involved in the initial steps of cilia formation, including removal of CP110 from the mother centrioles, docking of membrane vesicles to the mother centrioles, and establishment of the transition zone. The polypeptide is NADH dehydrogenase [ubiquinone] 1 alpha subcomplex assembly factor 2 (Ndufaf2) (Mus musculus (Mouse)).